Consider the following 215-residue polypeptide: Ras-like GTP-binding protein RHO1 (215 aa).

The GTP site is built by Ala30, Val31, Gly32, Lys33, Thr34, and Cys35. Residue Thr34 participates in Mg(2+) binding. 2 consecutive short sequence motifs (switch) follow at residues 43–54 and 74–93; these read GEIPTAYVPTVF and DTAGQEEYDRLRPLSYADSD. Thr52 provides a ligand contact to Mg(2+). Residues Asp135 and Ser166 each contribute to the GTP site. The disordered stretch occupies residues 194–215; sequence VTTQAKSQESTQQKKKSKCLLQ. Over residues 195–204 the composition is skewed to low complexity; that stretch reads TTQAKSQEST. Residues 206–215 show a composition bias toward basic residues; sequence QKKKSKCLLQ. At Cys212 the chain carries Cysteine methyl ester. Cys212 carries S-geranylgeranyl cysteine lipidation. The propeptide at 213–215 is removed in mature form; sequence LLQ.

Belongs to the small GTPase superfamily. Rho family. Interacts (GTP-bound form) with formin1 (via GBD/FH3 domain); the interaction activates formin1. Interacts (GTP-bound form) with profilin1. Interacts (GDP-bound form and when prenylated) with RhoGDI. It depends on Mg(2+) as a cofactor.

It localises to the cell membrane. It is found in the cytoplasm. Its subcellular location is the cytoskeleton. The protein resides in the cell projection. The protein localises to the phagocytic cup. It localises to the cytoplasmic vesicle. It is found in the phagosome. It carries out the reaction GTP + H2O = GDP + phosphate + H(+). Regulated by guanine nucleotide exchange factors (GEFs) which promote the exchange of bound GDP for free GTP, GTPase activating proteins (GAPs) which increase the GTP hydrolysis activity and GDP dissociation inhibitors which inhibit the dissociation of the nucleotide from the GTPase. In terms of biological role, small GTPase which cycles between active GTP-bound and inactive GDP-bound states. Involved in actin cytoskeleton remodeling. Regulates phagocytosis by modulating actin cytoskeleton dynamics through the recruitment of formin1 and profilin1 to the phagocytosis nucleation site. This chain is Ras-like GTP-binding protein RHO1, found in Entamoeba histolytica (strain ATCC 30459 / HM-1:IMSS / ABRM).